The following is a 401-amino-acid chain: MMYQPDREPGEDSCLVLSSSSVQRCTGSQRGCMPCTWAASKAFVGIGLQACVLTSSILHIDLLTRNSTCLILMIISMYVLSLIRVPISKMETIVTVCRSIQALATLVAASVWVAGSAVKKEHLLIVVTVCILFVFIAGTQISLFYVICSANGTGTHFRASLLAIIGGCVLGVSVKLVELKDVPIGIGIAIAIIASCQDFGLALRDTCHYRIGRYACMRTFTDLGRGINYRWVTDVEAVPKIEEVAEEKVSLFKFFKEMPGVIFSPAVGTHATPIIWIVLRLVYGISNVWQTPAYVVFCLTVGHVSAMLLEQLVIRVNYTAEASSGIHSTAHAVCMVLAAFGYGVAAPLSLAFTVSGGILGALYLRKRATGARRLAATHISRWLIVCVYVAAGLCYATIITH.

A run of 10 helical transmembrane segments spans residues 43 to 63 (FVGI…IDLL), 67 to 87 (STCL…RVPI), 93 to 113 (IVTV…SVWV), 124 to 144 (LIVV…ISLF), 159 to 179 (ASLL…LVEL), 182 to 202 (VPIG…FGLA), 259 to 279 (PGVI…WIVL), 294 to 314 (YVVF…QLVI), 332 to 352 (AVCM…SLAF), and 379 to 399 (ISRW…ATII).

It belongs to the alphaherpesvirinae HHV-1 UL43 family.

It is found in the membrane. This is Membrane protein UL43 homolog from Equine herpesvirus 1 (strain Ab4p) (EHV-1).